Here is a 119-residue protein sequence, read N- to C-terminus: Large ribosomal subunit protein bL20 (119 aa).

Belongs to the bacterial ribosomal protein bL20 family.

In terms of biological role, binds directly to 23S ribosomal RNA and is necessary for the in vitro assembly process of the 50S ribosomal subunit. It is not involved in the protein synthesizing functions of that subunit. This chain is Large ribosomal subunit protein bL20, found in Ruthia magnifica subsp. Calyptogena magnifica.